Here is a 468-residue protein sequence, read N- to C-terminus: Serine--tRNA ligase (468 aa).

272–274 lines the L-serine pocket; the sequence is TAE. 303-305 provides a ligand contact to ATP; that stretch reads RAE. E326 serves as a coordination point for L-serine. An ATP-binding site is contributed by 390–393; it reads EISS. S426 contributes to the L-serine binding site.

It belongs to the class-II aminoacyl-tRNA synthetase family. Type-1 seryl-tRNA synthetase subfamily. Homodimer. The tRNA molecule binds across the dimer.

The protein localises to the cytoplasm. It carries out the reaction tRNA(Ser) + L-serine + ATP = L-seryl-tRNA(Ser) + AMP + diphosphate + H(+). The enzyme catalyses tRNA(Sec) + L-serine + ATP = L-seryl-tRNA(Sec) + AMP + diphosphate + H(+). The protein operates within aminoacyl-tRNA biosynthesis; selenocysteinyl-tRNA(Sec) biosynthesis; L-seryl-tRNA(Sec) from L-serine and tRNA(Sec): step 1/1. In terms of biological role, catalyzes the attachment of serine to tRNA(Ser). Is also able to aminoacylate tRNA(Sec) with serine, to form the misacylated tRNA L-seryl-tRNA(Sec), which will be further converted into selenocysteinyl-tRNA(Sec). This Xanthobacter autotrophicus (strain ATCC BAA-1158 / Py2) protein is Serine--tRNA ligase.